The sequence spans 380 residues: Carbonic anhydrase 2 (380 aa).

Positions 1-20 (MARTGALLLAALALAGCAQA) are cleaved as a signal peptide. The Alpha-carbonic anhydrase domain occupies 38 to 322 (DHWDHSLNGE…HHHRRLLHNH (285 aa)). 3 cysteine pairs are disulfide-bonded: Cys-61-Cys-264, Cys-194-Cys-198, and Cys-296-Cys-354. Asn-101 is a glycosylation site (N-linked (GlcNAc...) asparagine). Catalysis depends on His-112, which acts as the Proton acceptor. Asn-135 carries N-linked (GlcNAc...) asparagine glycosylation. Zn(2+) is bound by residues His-163, His-165, and His-182. 260–261 (TT) is a substrate binding site. N-linked (GlcNAc...) asparagine glycosylation is present at Asn-297.

Belongs to the alpha-carbonic anhydrase family. In terms of assembly, tetramer of two large and two small subunits linked by two disulfide bonds. The cofactor is Zn(2+).

It localises to the periplasm. The enzyme catalyses hydrogencarbonate + H(+) = CO2 + H2O. In terms of biological role, reversible hydration of carbon dioxide. This Chlamydomonas reinhardtii (Chlamydomonas smithii) protein is Carbonic anhydrase 2 (CAH2).